An 815-amino-acid polypeptide reads, in one-letter code: Capsid vertex component 1 (815 aa).

Disordered regions lie at residues 227 to 280 and 795 to 815; these read THEQ…GDRE and RAPS…TILY. Basic and acidic residues-rich tracts occupy residues 236 to 262 and 271 to 280; these read PPKE…KDAA and NRQREPGDRE. Positions 799–809 are enriched in polar residues; sequence DFSTTSTSGHE.

The protein belongs to the herpesviridae CVC1 protein family. Interacts (via C-terminus) with capsid vertex component 2/CVC2.

It localises to the virion. Its subcellular location is the host nucleus. Capsid vertex-specific component that plays a role during viral DNA encapsidation, assuring correct genome cleavage and presumably stabilizing capsids that contain full-length viral genomes. The protein is Capsid vertex component 1 of Amazona oratrix (yellow-headed parrot).